Reading from the N-terminus, the 475-residue chain is Ribulose bisphosphate carboxylase large chain (475 aa).

A propeptide spanning residues 1–2 is cleaved from the precursor; it reads MS. P3 is modified (N-acetylproline). The residue at position 14 (K14) is an N6,N6,N6-trimethyllysine. The substrate site is built by N123 and T173. The active-site Proton acceptor is the K175. Position 177 (K177) interacts with substrate. Residues K201, D203, and E204 each contribute to the Mg(2+) site. K201 carries the post-translational modification N6-carboxylysine. H294 serves as the catalytic Proton acceptor. Positions 295, 327, and 379 each coordinate substrate.

The protein belongs to the RuBisCO large chain family. Type I subfamily. As to quaternary structure, heterohexadecamer of 8 large chains and 8 small chains; disulfide-linked. The disulfide link is formed within the large subunit homodimers. It depends on Mg(2+) as a cofactor. Post-translationally, the disulfide bond which can form in the large chain dimeric partners within the hexadecamer appears to be associated with oxidative stress and protein turnover.

The protein localises to the plastid. The protein resides in the chloroplast. The enzyme catalyses 2 (2R)-3-phosphoglycerate + 2 H(+) = D-ribulose 1,5-bisphosphate + CO2 + H2O. It carries out the reaction D-ribulose 1,5-bisphosphate + O2 = 2-phosphoglycolate + (2R)-3-phosphoglycerate + 2 H(+). Functionally, ruBisCO catalyzes two reactions: the carboxylation of D-ribulose 1,5-bisphosphate, the primary event in carbon dioxide fixation, as well as the oxidative fragmentation of the pentose substrate in the photorespiration process. Both reactions occur simultaneously and in competition at the same active site. This chain is Ribulose bisphosphate carboxylase large chain, found in Spirogyra maxima (Green alga).